The sequence spans 704 residues: Meprin A subunit beta (704 aa).

Positions 1 to 20 (MDARHWPWFLVFATFLLVSG) are cleaved as a signal peptide. A propeptide spanning residues 21–64 (LPAPEKFVKDIDGGIDQDIFDINEDLGLDLFEGDIKLEASGRNS) is cleaved from the precursor. Residues 21 to 654 (LPAPEKFVKD…RCEKRGSTKD (634 aa)) are Extracellular-facing. A Peptidase M12A domain is found at 63–257 (NSIIGDNYRW…LKLNQLYSCT (195 aa)). Intrachain disulfides connect C104–C256, C125–C145, and C266–C428. Residue H153 participates in Zn(2+) binding. E154 is a catalytic residue. H157 and H163 together coordinate Zn(2+). N-linked (GlcNAc...) asparagine glycosylation is found at N193, N219, N316, N422, N437, N528, N547, and N592. Residues 261-430 (SFMDSCDFEL…INLSETRCPH (170 aa)) form the MAM domain. Residues 431–585 (HIWHIQNFTQ…GDDVYILLTV (155 aa)) form the MATH domain. Residues 607–647 (VHNACSEVECQNGGICTLQEGRAECKCPAGEDWWYMGKRCE) form the EGF-like domain. 3 disulfides stabilise this stretch: C611–C622, C616–C631, and C633–C646. Residues 655–678 (TIVIAVSSTVTVFAVMLIITLISV) traverse the membrane as a helical segment. Residues 679–704 (YCTRRKYRKKASAKTAAMNLENQHAF) are Cytoplasmic-facing. T693 bears the Phosphothreonine mark.

Homotetramer consisting of disulfide-linked beta subunits, or heterotetramer of two alpha and two beta subunits formed by non-covalent association of two disulfide-linked heterodimers. Interacts with MBL2 through its carbohydrate moiety. This interaction may inhibit its catalytic activity. Interacts with TSPAN8. Zn(2+) serves as cofactor. In terms of processing, N-glycosylated; contains high mannose and/or complex biantennary structures. Proteolytically activated by trypsin in the intestinal lumen and kallikrein-related peptidases in other tissues. Post-translationally, phosphorylated by PKC at multiple sites of its cytoplasmic part. Phosphorylation dcreases activity at the cell surface, leading to diminished substrate cleavage. Kidney, intestinal brush borders and salivary ducts.

The protein localises to the cell membrane. Its subcellular location is the secreted. The catalysed reaction is Hydrolysis of proteins, including azocasein, and peptides. Hydrolysis of 5-His-|-Leu-6, 6-Leu-|-Cys-7, 14-Ala-|-Leu-15 and 19-Cys-|-Gly-20 bonds in insulin B chain.. With respect to regulation, strongly inhibited by fetuin-A/AHSG. Functionally, membrane metallopeptidase that sheds many membrane-bound proteins. Exhibits a strong preference for acidic amino acids at the P1' position. Known substrates include: FGF19, VGFA, IL1B, IL18, procollagen I and III, E-cadherin, KLK7, gastrin, ADAM10, tenascin-C. The presence of several pro-inflammatory cytokine among substrates implicate MEP1B in inflammation. It is also involved in tissue remodeling due to its capability to degrade extracellular matrix components. This chain is Meprin A subunit beta (Mep1b), found in Rattus norvegicus (Rat).